Here is a 947-residue protein sequence, read N- to C-terminus: Vacuolar membrane protease (947 aa).

Residues 1–15 are Cytoplasmic-facing; sequence MRFKALLRAIFRFRK. A helical membrane pass occupies residues 16–36; it reads TNFSILLIITYAIIIALLVFD. Residues 37–358 lie on the Vacuolar side of the membrane; that stretch reads RSRYKLDLPN…GLFFVVVDTK (322 aa). Residues Asn-46, Asn-92, Asn-108, and Asn-121 are each glycosylated (N-linked (GlcNAc...) asparagine). 2 residues coordinate Zn(2+): His-156 and Asp-168. Residue Glu-200 is the Proton acceptor of the active site. Zn(2+)-binding residues include Glu-201, Glu-226, and His-300. N-linked (GlcNAc...) asparagine glycosylation is present at Asn-319. The chain crosses the membrane as a helical span at residues 359–379; the sequence is HLFYADIFMLIVGPILLMMKA. Topologically, residues 380–391 are cytoplasmic; sequence HLDKRRRLERSR. Residues 392 to 412 traverse the membrane as a helical segment; that stretch reads LVQLRLLLSLGLSVVFLLLLT. At 413 to 428 the chain is on the vacuolar side; that stretch reads KSLNSFNPFVYSADYR. The chain crosses the membrane as a helical span at residues 429–449; that stretch reads TPLTGLFLLFVTVNYLIVTLA. Topologically, residues 450–458 are cytoplasmic; that stretch reads ERLNPTESY. The chain crosses the membrane as a helical span at residues 459–479; sequence KTVAINQIFIIAWLMQLYITL. Over 480 to 489 the chain is Vacuolar; that stretch reads RMAKSDFTLT. A helical membrane pass occupies residues 490–510; sequence GTYPLSIFSGCLIVALSLGLF. At 511–601 the chain is on the cytoplasmic side; that stretch reads GTKNKAVNDA…DKNSDFSKHY (91 aa). Polar residues-rich tracts occupy residues 522–531 and 546–567; these read NSSVRYASSQ and NINQ…TDLH. The segment at 522–573 is disordered; that stretch reads NSSVRYASSQNDEDNPLPSQDRGENINQVRDTGNQEVTSNTNTDLHSNAEEV. Residues 602 to 622 form a helical membrane-spanning segment; it reads NWIVQFLCIVPISSFIFLFSL. Residues 623 to 641 lie on the Vacuolar side of the membrane; sequence DYTLDAIHKMVQETTDDVQ. Residues 642-662 traverse the membrane as a helical segment; the sequence is LICIIITIGVILLALPILPFI. Topologically, residues 663–669 are cytoplasmic; the sequence is SKLNYQS. A helical membrane pass occupies residues 670 to 690; the sequence is SVIIAIIGVLLFGKSLVMQPF. Over 691–947 the chain is Vacuolar; that stretch reads SEIAPLKVRF…LVVIKDKIQL (257 aa). N-linked (GlcNAc...) asparagine glycosylation is found at Asn-742, Asn-784, Asn-801, and Asn-833.

Belongs to the peptidase M28 family. Requires Zn(2+) as cofactor.

It localises to the vacuole membrane. Functionally, may be involved in vacuolar sorting and osmoregulation. The polypeptide is Vacuolar membrane protease (Candida glabrata (strain ATCC 2001 / BCRC 20586 / JCM 3761 / NBRC 0622 / NRRL Y-65 / CBS 138) (Yeast)).